The primary structure comprises 232 residues: 7-cyano-7-deazaguanine synthase (232 aa).

Residue 8 to 18 (FSGGQDSTTCL) participates in ATP binding. Zn(2+) is bound by residues Cys187, Cys196, Cys199, and Cys202.

The protein belongs to the QueC family. It depends on Zn(2+) as a cofactor.

The enzyme catalyses 7-carboxy-7-deazaguanine + NH4(+) + ATP = 7-cyano-7-deazaguanine + ADP + phosphate + H2O + H(+). It functions in the pathway purine metabolism; 7-cyano-7-deazaguanine biosynthesis. In terms of biological role, catalyzes the ATP-dependent conversion of 7-carboxy-7-deazaguanine (CDG) to 7-cyano-7-deazaguanine (preQ(0)). This chain is 7-cyano-7-deazaguanine synthase, found in Shewanella denitrificans (strain OS217 / ATCC BAA-1090 / DSM 15013).